The following is a 300-amino-acid chain: Transcriptional dual regulator GltC (300 aa).

The HTH lysR-type domain maps to 1 to 58; the sequence is MELRQLRYFMEVAEREHVSEAADHLHVAQSAISRQIANLEEELNVTLFEREGRNIKLT. The H-T-H motif DNA-binding region spans 18-37; that stretch reads VSEAADHLHVAQSAISRQIA.

The protein belongs to the LysR transcriptional regulatory family. In terms of assembly, interacts with gutamate dehydrogenase RocG.

Its activity is regulated as follows. Activated by alpha-ketoglutarate and inhibited by glutamate and by RocG. Positive regulator of glutamate biosynthesis (gltAB genes). Negatively regulates its own expression. In Bacillus subtilis (strain 168), this protein is Transcriptional dual regulator GltC (gltC).